Reading from the N-terminus, the 301-residue chain is Methionine aminopeptidase (301 aa).

Residue H65 coordinates substrate. A divalent metal cation contacts are provided by D85, D96, and H156. A substrate-binding site is contributed by H164. Positions 189 and 284 each coordinate a divalent metal cation.

This sequence belongs to the peptidase M24A family. Methionine aminopeptidase archaeal type 2 subfamily. As to quaternary structure, monomer. The cofactor is Co(2+). It depends on Zn(2+) as a cofactor. Mn(2+) serves as cofactor. Requires Fe(2+) as cofactor.

It carries out the reaction Release of N-terminal amino acids, preferentially methionine, from peptides and arylamides.. In terms of biological role, removes the N-terminal methionine from nascent proteins. The N-terminal methionine is often cleaved when the second residue in the primary sequence is small and uncharged (Met-Ala-, Cys, Gly, Pro, Ser, Thr, or Val). This chain is Methionine aminopeptidase, found in Saccharolobus solfataricus (strain ATCC 35092 / DSM 1617 / JCM 11322 / P2) (Sulfolobus solfataricus).